Reading from the N-terminus, the 557-residue chain is Small ribosomal subunit protein bS1 (557 aa).

4 consecutive S1 motif domains span residues 21-87 (GSIV…LSRE), 105-171 (AETV…VSRR), 192-260 (GMEV…LGLK), and 277-347 (GTKL…LGLK). N6-acetyllysine occurs at positions 229, 279, and 363. S1 motif domains are found at residues 364 to 434 (GDRV…LGVK) and 451 to 520 (GAIV…LSVR).

It belongs to the bacterial ribosomal protein bS1 family. As to quaternary structure, part of the 30S ribosomal subunit. Some nascent polypeptide chains are able to cross-link to this protein in situ. Can be cross-linked to mRNA in the ribosome. Phosphorylated; probably on a serine.

Functionally, required for translation of most natural mRNAs except for leaderless mRNA. Binds mRNA upstream of the Shine-Dalgarno (SD) sequence and helps it bind to the 30S ribosomal subunit; acts as an RNA chaperone to unfold structured mRNA on the ribosome but is not essential for mRNAs with strong SDs and little 5'-UTR structure, thus it may help fine-tune which mRNAs that are translated. Unwinds dsRNA by binding to transiently formed ssRNA regions; binds about 10 nucleotides. Has a preference for polypyrimidine tracts. Negatively autoregulates its own translation. This Escherichia coli O157:H7 protein is Small ribosomal subunit protein bS1 (rpsA).